A 127-amino-acid polypeptide reads, in one-letter code: Small ribosomal subunit protein uS11 (127 aa).

This sequence belongs to the universal ribosomal protein uS11 family. In terms of assembly, part of the 30S ribosomal subunit. Interacts with proteins S7 and S18. Binds to IF-3.

Its function is as follows. Located on the platform of the 30S subunit, it bridges several disparate RNA helices of the 16S rRNA. Forms part of the Shine-Dalgarno cleft in the 70S ribosome. The chain is Small ribosomal subunit protein uS11 from Chlorobium phaeobacteroides (strain DSM 266 / SMG 266 / 2430).